A 118-amino-acid chain; its full sequence is Large ribosomal subunit protein bL20 (118 aa).

Belongs to the bacterial ribosomal protein bL20 family.

Functionally, binds directly to 23S ribosomal RNA and is necessary for the in vitro assembly process of the 50S ribosomal subunit. It is not involved in the protein synthesizing functions of that subunit. The protein is Large ribosomal subunit protein bL20 of Enterobacter sp. (strain 638).